A 340-amino-acid polypeptide reads, in one-letter code: 4-hydroxy-3-methylbut-2-enyl diphosphate reductase (340 aa).

C13 serves as a coordination point for [4Fe-4S] cluster. Residues H42 and H75 each coordinate (2E)-4-hydroxy-3-methylbut-2-enyl diphosphate. Residues H42 and H75 each contribute to the dimethylallyl diphosphate site. 2 residues coordinate isopentenyl diphosphate: H42 and H75. Residue C97 participates in [4Fe-4S] cluster binding. H125 contributes to the (2E)-4-hydroxy-3-methylbut-2-enyl diphosphate binding site. H125 lines the dimethylallyl diphosphate pocket. Residue H125 coordinates isopentenyl diphosphate. E127 (proton donor) is an active-site residue. Position 165 (T165) interacts with (2E)-4-hydroxy-3-methylbut-2-enyl diphosphate. C195 serves as a coordination point for [4Fe-4S] cluster. S223, S224, N225, and S267 together coordinate (2E)-4-hydroxy-3-methylbut-2-enyl diphosphate. Residues S223, S224, N225, and S267 each coordinate dimethylallyl diphosphate. Residues S223, S224, N225, and S267 each coordinate isopentenyl diphosphate. The disordered stretch occupies residues 317-340; sequence NNLDNKTAASEEADSLSNDTEQEA. Over residues 331–340 the composition is skewed to polar residues; the sequence is SLSNDTEQEA.

It belongs to the IspH family. Requires [4Fe-4S] cluster as cofactor.

It catalyses the reaction isopentenyl diphosphate + 2 oxidized [2Fe-2S]-[ferredoxin] + H2O = (2E)-4-hydroxy-3-methylbut-2-enyl diphosphate + 2 reduced [2Fe-2S]-[ferredoxin] + 2 H(+). The enzyme catalyses dimethylallyl diphosphate + 2 oxidized [2Fe-2S]-[ferredoxin] + H2O = (2E)-4-hydroxy-3-methylbut-2-enyl diphosphate + 2 reduced [2Fe-2S]-[ferredoxin] + 2 H(+). Its pathway is isoprenoid biosynthesis; dimethylallyl diphosphate biosynthesis; dimethylallyl diphosphate from (2E)-4-hydroxy-3-methylbutenyl diphosphate: step 1/1. It functions in the pathway isoprenoid biosynthesis; isopentenyl diphosphate biosynthesis via DXP pathway; isopentenyl diphosphate from 1-deoxy-D-xylulose 5-phosphate: step 6/6. In terms of biological role, catalyzes the conversion of 1-hydroxy-2-methyl-2-(E)-butenyl 4-diphosphate (HMBPP) into a mixture of isopentenyl diphosphate (IPP) and dimethylallyl diphosphate (DMAPP). Acts in the terminal step of the DOXP/MEP pathway for isoprenoid precursor biosynthesis. The protein is 4-hydroxy-3-methylbut-2-enyl diphosphate reductase of Zymomonas mobilis subsp. mobilis (strain ATCC 31821 / ZM4 / CP4).